A 132-amino-acid chain; its full sequence is uncharacterized protein (132 aa).

This is an uncharacterized protein from Mycoplasma genitalium (strain ATCC 33530 / DSM 19775 / NCTC 10195 / G37) (Mycoplasmoides genitalium).